The sequence spans 1534 residues: Alpha-2-macroglobulin homolog (1534 aa).

The N-terminal stretch at 1 to 38 is a signal peptide; sequence MDTQRFQSQFHWHLSFKFSGAIAACLSLSLVGTGLANA.

It belongs to the protease inhibitor I39 (alpha-2-macroglobulin) family. Bacterial alpha-2-macroglobulin subfamily.

The sequence is that of Alpha-2-macroglobulin homolog (yfaS) from Escherichia coli O157:H7.